Here is a 159-residue protein sequence, read N- to C-terminus: Dehydratase GME11372 (159 aa).

Catalysis depends on residues His79 and His104.

The protein belongs to the scytalone dehydratase family. As to quaternary structure, homotrimer. Each subunit contains an active site, located in the central part of the hydrophobic core of the monomer, which functions independently.

The protein operates within secondary metabolite biosynthesis. Functionally, dehydratase; part of the gene cluster that mediates the biosynthesis of dibenzodioxocinones such as pestalotiollide B, a novel class of inhibitors against cholesterol ester transfer protein (CEPT). The biosynthesis initiates from condensation of acetate and malonate units catalyzed by the non-reducing PKS pks8/GME11356. Pks8/GME11356 lacks a thioesterase (TE) domain, which is important to the cyclizing of the third ring of atrochrysone carboxylic acid, and the esterase GME11355 might play the role of TE and catalyzes the cyclization reaction of the C ring. The lactamase-like protein GME11357 (or other beta-lactamases in Pestalotiopsis microspora) probably hydrolyzes the thioester bond between the ACP of pks8/GME11356 and the intermediate to release atrochrysone carboxylic acid, which is spontaneously dehydrates to form endocrocin anthrone. Endocrocin anthrone is further converted to emodin via the endocrocin intermediate. Emodin is then oxidized by several enzymes such as the Baeyer-Villiger oxidase GME11358, the oxidoreductase GME11367, the short chain dehydrogenase/reductase GME11373, as well as by other oxidoreductases from the cluster, to modify the A and C rings and open the B ring, and finally yield monodictyphenone. The prenyltransferase GME11375 may catalyze the addition reaction between the C5 side chains and the carbon bone of dibenzodioxocinones. The remaining biochemical reactions to the final product dibenzodioxocinones should be methylation catalyzed by methyltransferase GME11366 and reduction and lactonization reaction catalyzed by a series of oxidordeuctases. The chain is Dehydratase GME11372 from Pestalotiopsis microspora.